The chain runs to 751 residues: MPNSVGKRFKPTKYIPVSTAATLLVGSTTLFFVFTCPWLTKAVSPVVPLYNGIVFLFVLANFSMATFMDPGVFPRADEDEDKDDDFRAPLYKNVEIKGIQVRMKWCATCHFYRPPRCSHCSVCDNCVEEFDHHCPWVNNCIGRRNYRYFFLFLLSLSVHMVGVFSFGLLFVLHHLETLSALHTTVTLVVMCVTGLFFIPVMGLTGFHMVLVARGRTTNEQVTGKFRGGVNPFTRGCGGNVKHVLCSPLAPRYIADPRKKIPVTVTPPFLRPDLSNRHISVKVSDNGIHSNILRSKSKTSLNGMDDKSIDAQPPLPPKADRYNQIKSQLTSSEESSLSSKPTNPSTPAMFKYRPSFGTMPKVHYHATGEKIVMCENGNPSAVLEERSHDYRSEPNLDLPDYRSAPLHRTYQSSPFQLDSFSTTSRSFSLKQGVNRADCTPLGGTKHETITSTPHRGVFSPGTLSGRNSSLSYDSLLTPSVAPSIGECAAHPGVPSMGFHSPYLPTKMCHVRGPELQRHAGPPSYSPVHIGAMYGRQSPLSRERERDPSPVRYDNLSKTIMASIQERKEFEEREKLMHRHVQGYANDSGVFDTAYGLPHGYPDGPRGPASREPTPPVCASRDNLMGYPPRTPVLRSSASSLVRAPRTSTTSLHTDGGGMNRTAELQYRSPVHQSHQSPTSVPRSPSYAHQKVAFISALERADSPHLGTREDIGQGKVNGQLKGQYGTPSGTPSRHTSVKKVTGVGGTTYEISV.

The Cytoplasmic portion of the chain corresponds to 1 to 13 (MPNSVGKRFKPTK). Residues 14 to 34 (YIPVSTAATLLVGSTTLFFVF) form a helical membrane-spanning segment. The Extracellular segment spans residues 35–41 (TCPWLTK). A helical transmembrane segment spans residues 42 to 62 (AVSPVVPLYNGIVFLFVLANF). At 63–148 (SMATFMDPGV…NCIGRRNYRY (86 aa)) the chain is on the cytoplasmic side. Residues 104–154 (KWCATCHFYRPPRCSHCSVCDNCVEEFDHHCPWVNNCIGRRNYRYFFLFLL) form the DHHC domain. Residue Cys-134 is the S-palmitoyl cysteine intermediate of the active site. A helical membrane pass occupies residues 149–169 (FFLFLLSLSVHMVGVFSFGLL). The Extracellular segment spans residues 170-185 (FVLHHLETLSALHTTV). A helical membrane pass occupies residues 186 to 206 (TLVVMCVTGLFFIPVMGLTGF). The Cytoplasmic segment spans residues 207-751 (HMVLVARGRT…VGGTTYEISV (545 aa)). 5 disordered regions span residues 293-346 (RSKS…PSTP), 437-461 (CTPL…SPGT), 633-659 (RSSA…GMNR), 666-685 (RSPV…SPSY), and 703-736 (HLGT…HTSV). A compositionally biased stretch (low complexity) spans 326-338 (SQLTSSEESSLSS). Composition is skewed to polar residues over residues 633-651 (RSSA…TSLH), 669-681 (VHQS…SVPR), and 724-733 (GTPSGTPSRH).

Belongs to the DHHC palmitoyltransferase family. ERF2/ZDHHC9 subfamily.

It is found in the golgi apparatus membrane. Its subcellular location is the mitochondrion membrane. The enzyme catalyses L-cysteinyl-[protein] + hexadecanoyl-CoA = S-hexadecanoyl-L-cysteinyl-[protein] + CoA. In terms of biological role, palmitoyltransferase that catalyzes the addition of palmitate onto various protein substrates and therefore function in several unrelated biological processes. This chain is Palmitoyltransferase ZDHHC8B, found in Danio rerio (Zebrafish).